The primary structure comprises 226 residues: 7-cyano-7-deazaguanine synthase (226 aa).

ATP is bound at residue 10–20 (LSGGLDSATAA). The Zn(2+) site is built by Cys-191, Cys-199, Cys-202, and Cys-205.

It belongs to the QueC family. Requires Zn(2+) as cofactor.

The enzyme catalyses 7-carboxy-7-deazaguanine + NH4(+) + ATP = 7-cyano-7-deazaguanine + ADP + phosphate + H2O + H(+). Its pathway is purine metabolism; 7-cyano-7-deazaguanine biosynthesis. Functionally, catalyzes the ATP-dependent conversion of 7-carboxy-7-deazaguanine (CDG) to 7-cyano-7-deazaguanine (preQ(0)). This chain is 7-cyano-7-deazaguanine synthase, found in Synechococcus sp. (strain CC9311).